The following is an 88-amino-acid chain: uncharacterized protein (88 aa).

The N-terminal stretch at 1–24 (MLPRSCKDFYETLRTAVLCGQACA) is a signal peptide.

To Rhizobium NGR234A y4oL.

This is an uncharacterized protein from Sinorhizobium fredii (strain NBRC 101917 / NGR234).